The chain runs to 194 residues: ATP-dependent Clp protease proteolytic subunit 4 (194 aa).

S100 functions as the Nucleophile in the catalytic mechanism. H125 is an active-site residue.

Belongs to the peptidase S14 family. As to quaternary structure, fourteen ClpP subunits assemble into 2 heptameric rings which stack back to back to give a disk-like structure with a central cavity, resembling the structure of eukaryotic proteasomes.

It localises to the cytoplasm. The enzyme catalyses Hydrolysis of proteins to small peptides in the presence of ATP and magnesium. alpha-casein is the usual test substrate. In the absence of ATP, only oligopeptides shorter than five residues are hydrolyzed (such as succinyl-Leu-Tyr-|-NHMec, and Leu-Tyr-Leu-|-Tyr-Trp, in which cleavage of the -Tyr-|-Leu- and -Tyr-|-Trp bonds also occurs).. Functionally, cleaves peptides in various proteins in a process that requires ATP hydrolysis. Has a chymotrypsin-like activity. Plays a major role in the degradation of misfolded proteins. The chain is ATP-dependent Clp protease proteolytic subunit 4 from Rhodococcus jostii (strain RHA1).